A 426-amino-acid chain; its full sequence is Monocarboxylate transporter 13 (426 aa).

Topologically, residues 1–10 (MAYRAEPPDG) are cytoplasmic. A run of 12 helical transmembrane segments spans residues 11 to 31 (GWGWMVVLSAFFQSALVFGVL), 52 to 72 (VSWIASIGIAVQQFGSPVGSA), 83 to 103 (VMTGGILTALGMLLASFATSL), 106 to 126 (LYLSIGLLSGSGWALTFTPTL), 139 to 159 (LAMGLALTGVGLSSFAFAPLF), 172 to 192 (LLLVSALSLHLVACGALLRPL), 221 to 241 (VALTLINTGYFIPYVHLVAHL), 244 to 264 (LGWDPLPAAFLLSVAAISDLV), 283 to 303 (LLMLWTTLTGVILALYPVAEA), 306 to 326 (GLVALTMAYGFTSGALTPVAF), 338 to 358 (IYCGLGLVQMVESIGGLLGAP), and 374 to 394 (FVVAGAFLLAGSGVLITLPHF). At 395-426 (FCFSAPTSKPQDLVTEALDTKVPLPEEGLGED) the chain is on the cytoplasmic side.

This sequence belongs to the major facilitator superfamily. Monocarboxylate porter (TC 2.A.1.13) family.

The protein resides in the golgi apparatus membrane. The protein localises to the cell membrane. Functionally, proton-linked monocarboxylate transporter. May catalyze the transport of monocarboxylates across the plasma membrane. The sequence is that of Monocarboxylate transporter 13 (SLC16A13) from Bos taurus (Bovine).